Reading from the N-terminus, the 422-residue chain is UDP-N-acetylglucosamine 1-carboxyvinyltransferase (422 aa).

Phosphoenolpyruvate is bound at residue 22–23 (KN). Arg93 serves as a coordination point for UDP-N-acetyl-alpha-D-glucosamine. Cys117 serves as the catalytic Proton donor. Cys117 is modified (2-(S-cysteinyl)pyruvic acid O-phosphothioketal). Residues 122 to 126 (RPVDL), Asp308, and Leu330 each bind UDP-N-acetyl-alpha-D-glucosamine.

Belongs to the EPSP synthase family. MurA subfamily.

It is found in the cytoplasm. It carries out the reaction phosphoenolpyruvate + UDP-N-acetyl-alpha-D-glucosamine = UDP-N-acetyl-3-O-(1-carboxyvinyl)-alpha-D-glucosamine + phosphate. It functions in the pathway cell wall biogenesis; peptidoglycan biosynthesis. Functionally, cell wall formation. Adds enolpyruvyl to UDP-N-acetylglucosamine. The chain is UDP-N-acetylglucosamine 1-carboxyvinyltransferase from Helicobacter pylori (strain J99 / ATCC 700824) (Campylobacter pylori J99).